The primary structure comprises 626 residues: Chaperone protein HtpG (626 aa).

The a; substrate-binding stretch occupies residues Met1–Arg331. Positions Glu332–Arg544 are b. The tract at residues Leu545–Ala626 is c.

Belongs to the heat shock protein 90 family. As to quaternary structure, homodimer.

It is found in the cytoplasm. Functionally, molecular chaperone. Has ATPase activity. This chain is Chaperone protein HtpG, found in Methylorubrum extorquens (strain CM4 / NCIMB 13688) (Methylobacterium extorquens).